A 2703-amino-acid chain; its full sequence is Neurogenic locus Notch protein (2703 aa).

Positions 1–52 are cleaved as a signal peptide; that stretch reads MQSQRSRRRSRAPNTWICFWINKMHAVASLPASLPLLLLTLAFANLPNTVRG. The Extracellular segment spans residues 53-1745; sequence TDTALVAASC…NGEPPANVKY (1693 aa). EGF-like domains are found at residues 58-95, 96-136, 139-176, and 177-215; these read VAAS…DYCE, HRNP…SLCE, VPNA…ERCE, and TKNL…DTCS. 24 disulfide bridges follow: Cys62/Cys73, Cys67/Cys83, Cys85/Cys94, Cys100/Cys111, Cys105/Cys124, Cys126/Cys135, Cys143/Cys154, Cys148/Cys164, Cys166/Cys175, Cys181/Cys192, Cys186/Cys203, Cys205/Cys214, Cys221/Cys232, Cys226/Cys241, Cys243/Cys252, Cys259/Cys270, Cys264/Cys279, Cys281/Cys290, Cys297/Cys308, Cys302/Cys317, Cys319/Cys328, Cys335/Cys349, Cys343/Cys358, and Cys360/Cys369. An O-linked (Fuc...) threonine glycan is attached at Thr72. Residue Thr110 is glycosylated (O-linked (Fuc...) threonine). An O-linked (Fuc...) threonine glycan is attached at Thr153. O-linked (Glc...) serine glycosylation is present at Ser183. Residue Thr191 is glycosylated (O-linked (Fuc...) threonine). A glycan (O-linked (GlcNAc...) threonine) is linked at Thr210. One can recognise an EGF-like 5; calcium-binding domain in the interval 217–253; that stretch reads DIEECQSNPCKYGGTCVNTHGSYQCMCPTGYTGKDCD. Ser223 is a glycosylation site (O-linked (Glc...) serine). Thr231 is a glycosylation site (O-linked (Fuc...) threonine). The EGF-like 6 domain occupies 255–291; that stretch reads KYKPCSPSPCQNGGICRSNGLSYECKCPKGFEGKNCE. An EGF-like 7; calcium-binding domain is found at 293–329; the sequence is NYDDCLGHLCQNGGTCIDGISDYTCRCPPNFTGRFCQ. Thr307 carries an O-linked (Fuc...) threonine glycan. N-linked (GlcNAc...) asparagine glycosylation occurs at Asn322. The 40-residue stretch at 331–370 folds into the EGF-like 8; calcium-binding domain; it reads DVDECAQRDHPVCQNGATCTNTHGSYSCICVNGWAGLDCS. Thr348 carries O-linked (Fuc...) threonine glycosylation. The N-linked (GlcNAc...) asparagine glycan is linked to Asn371. In terms of domain architecture, EGF-like 9; calcium-binding spans 372–408; it reads NTDDCKQAACFYGATCIDGVGSFYCQCTKGKTGLLCH. 8 disulfide bridges follow: Cys376-Cys387, Cys381-Cys396, Cys398-Cys407, Cys413-Cys424, Cys418-Cys435, Cys437-Cys446, Cys453-Cys465, and Cys459-Cys474. Thr386 carries O-linked (Fuc...) threonine glycosylation. The region spanning 409-447 is the EGF-like 10 domain; sequence LDDACTSNPCHADAICDTSPINGSYACSCATGYKGVDCS. Residue Ser427 is glycosylated (O-linked (Glc...) serine). N-linked (GlcNAc...) asparagine glycosylation occurs at Asn430. An EGF-like 11; calcium-binding domain is found at 449–486; sequence DIDECDQGSPCEHNGICVNTPGSYRCNCSQGFTGPRCE. Residue Asn475 is glycosylated (N-linked (GlcNAc...) asparagine). 78 disulfide bridges follow: Cys476–Cys485, Cys492–Cys503, Cys497–Cys512, Cys514–Cys523, Cys530–Cys541, Cys535–Cys550, Cys552–Cys561, Cys568–Cys579, Cys573–Cys588, Cys590–Cys599, Cys606–Cys616, Cys611–Cys625, Cys627–Cys636, Cys643–Cys654, Cys648–Cys663, Cys665–Cys674, Cys681–Cys692, Cys686–Cys701, Cys703–Cys712, Cys719–Cys730, Cys724–Cys739, Cys741–Cys750, Cys757–Cys768, Cys762–Cys777, Cys779–Cys788, Cys795–Cys806, Cys800–Cys815, Cys817–Cys826, Cys833–Cys844, Cys838–Cys853, Cys855–Cys864, Cys871–Cys882, Cys876–Cys893, Cys895–Cys904, Cys911–Cys923, Cys917–Cys932, Cys934–Cys943, Cys950–Cys961, Cys955–Cys970, Cys972–Cys981, Cys988–Cys999, Cys993–Cys1008, Cys1010–Cys1019, Cys1026–Cys1037, Cys1031–Cys1046, Cys1048–Cys1057, Cys1064–Cys1075, Cys1069–Cys1084, Cys1086–Cys1095, Cys1102–Cys1113, Cys1107–Cys1122, Cys1124–Cys1133, Cys1155–Cys1160, Cys1171–Cys1180, Cys1187–Cys1198, Cys1192–Cys1207, Cys1209–Cys1218, Cys1225–Cys1236, Cys1230–Cys1245, Cys1247–Cys1256, Cys1263–Cys1274, Cys1268–Cys1283, Cys1285–Cys1294, Cys1301–Cys1314, Cys1306–Cys1323, Cys1325–Cys1334, Cys1341–Cys1352, Cys1346–Cys1361, Cys1363–Cys1372, Cys1379–Cys1389, Cys1384–Cys1400, Cys1402–Cys1411, Cys1419–Cys1430, Cys1424–Cys1439, Cys1441–Cys1450, Cys1482–Cys1505, Cys1487–Cys1500, and Cys1496–Cys1512. O-linked (GlcNAc...) threonine glycosylation is present at Thr481. The EGF-like 12; calcium-binding domain occupies 488–524; it reads NINECESHPCQNEGSCLDDPGTFRCVCMPGFTGTQCE. O-linked (Glc...) serine glycosylation occurs at Ser494. The O-linked (Fuc...) serine glycan is linked to Ser502. O-linked (GlcNAc...) threonine glycosylation occurs at Thr519. The 37-residue stretch at 526–562 folds into the EGF-like 13; calcium-binding domain; that stretch reads DIDECQSNPCLNDGTCHDKINGFKCSCALGFTGARCQ. The O-linked (Glc...) serine glycan is linked to Ser532. An EGF-like 14; calcium-binding domain is found at 564-600; that stretch reads NIDDCQSQPCRNRGICHDSIAGYSCECPPGYTGTSCE. Ser570 carries an O-linked (Glc...) serine glycan. The O-linked (GlcNAc...) threonine glycan is linked to Thr595. The EGF-like 15; calcium-binding domain occupies 602 to 637; it reads NINDCDSNPCHRGKCIDDVNSFKCLCDPGYTGYICQ. Ser608 carries an O-linked (Glc...) serine glycan. Residues 639–675 form the EGF-like 16; calcium-binding domain; sequence QINECESNPCQFDGHCQDRVGSYYCQCQAGTSGKNCE. Ser645 is a glycosylation site (O-linked (Glc...) serine). Residues 677-713 form the EGF-like 17; calcium-binding domain; that stretch reads NVNECHSNPCNNGATCIDGINSYKCQCVPGFTGQHCE. O-linked (Glc...) serine glycosylation occurs at Ser683. O-linked (Fuc...) threonine glycosylation occurs at Thr691. The 37-residue stretch at 715–751 folds into the EGF-like 18; calcium-binding domain; that stretch reads NVDECISSPCANNGVCIDQVNGYKCECPRGFYDAHCL. O-linked (Glc...) serine glycosylation occurs at Ser721. The region spanning 753-789 is the EGF-like 19; calcium-binding domain; it reads DVDECASNPCVNEGRCEDGINEFICHCPPGYTGKRCE. An O-linked (Glc...) serine glycan is attached at Ser759. The 37-residue stretch at 791 to 827 folds into the EGF-like 20; calcium-binding domain; sequence DIDECSSNPCQHGGTCYDKLNAFSCQCMPGYTGQKCE. A glycan (O-linked (Glc...) serine) is linked at Ser797. A glycan (O-linked (Fuc...) threonine) is linked at Thr805. Residue Thr822 is glycosylated (O-linked (GlcNAc...) threonine). The 37-residue stretch at 829-865 folds into the EGF-like 21; calcium-binding domain; sequence NIDDCVTNPCGNGGTCIDKVNGYKCVCKVPFTGRDCE. The O-linked (Fuc...) threonine glycan is linked to Thr843. The 39-residue stretch at 867-905 folds into the EGF-like 22 domain; it reads KMDPCASNRCKNEAKCTPSSNFLDFSCTCKLGYTGRYCD. The 38-residue stretch at 907-944 folds into the EGF-like 23; calcium-binding domain; the sequence is DIDECSLSSPCRNGASCLNVPGSYRCLCTKGYEGRDCA. An O-linked (Fuc...) serine glycan is attached at Ser922. The region spanning 946–982 is the EGF-like 24; calcium-binding domain; that stretch reads NTDDCASFPCQNGGTCLDGIGDYSCLCVDGFDGKHCE. Residue Ser952 is glycosylated (O-linked (Glc...) serine). Residue Thr960 is glycosylated (O-linked (Fuc...) threonine). An EGF-like 25 domain is found at 984–1020; it reads DINECLSQPCQNGATCSQYVNSYTCTCPLGFSGINCQ. Ser990 is a glycosylation site (O-linked (Glc...) serine). Thr998 carries O-linked (Fuc...) threonine glycosylation. Residues 1022 to 1058 enclose the EGF-like 26; calcium-binding domain; that stretch reads NDEDCTESSCLNGGSCIDGINGYNCSCLAGYSGANCQ. Ser1036 is a glycosylation site (O-linked (Fuc...) serine). Asn1045 carries an N-linked (GlcNAc...) asparagine glycan. EGF-like domains are found at residues 1060 to 1096, 1098 to 1134, and 1136 to 1181; these read KLNK…KQCS, YVDW…KLCD, and QTIS…SYCQ. Ser1066 carries an O-linked (Glc...) serine glycan. Thr1074 carries O-linked (Fuc...) threonine glycosylation. Thr1112 carries O-linked (Fuc...) threonine glycosylation. The N-linked (GlcNAc...) asparagine glycan is linked to Asn1157. The 37-residue stretch at 1183–1219 folds into the EGF-like 30; calcium-binding domain; the sequence is EIDECQSQPCQNGGTCRDLIGAYECQCRQGFQGQNCE. Ser1189 carries an O-linked (Glc...) serine glycan. Thr1197 is a glycosylation site (O-linked (Fuc...) threonine). Residues 1221–1257 enclose the EGF-like 31; calcium-binding domain; that stretch reads NIDDCAPNPCQNGGTCHDRVMNFSCSCPPGTMGIICE. Thr1235 carries an O-linked (Fuc...) threonine glycan. The N-linked (GlcNAc...) asparagine glycan is linked to Asn1242. An EGF-like 32; calcium-binding domain is found at 1259 to 1295; sequence NKDDCKPGACHNNGSCIDRVGGFECVCQPGFVGARCE. Asn1271 carries an N-linked (GlcNAc...) asparagine glycan. Ser1273 carries O-linked (Fuc...) serine glycosylation. 4 consecutive EGF-like domains span residues 1297-1335, 1337-1373, 1375-1412, and 1415-1451; these read DINE…RHCE, KVDF…KNCE, SGQD…EHCE, and TLDE…KRCD. O-linked (Glc...) serine glycosylation is present at Ser1303. The O-linked (Glc...) serine glycan is linked to Ser1381. 3 LNR repeats span residues 1482–1521, 1522–1557, and 1559–1599; these read CDKR…PWAN, CTAN…RKLK, and CDSL…TQSP. A glycan (N-linked (GlcNAc...) asparagine) is linked at Asn1521. 6 disulfide bridges follow: Cys1522–Cys1545, Cys1527–Cys1540, Cys1536–Cys1552, Cys1559–Cys1585, Cys1567–Cys1580, and Cys1576–Cys1592. Asn1594 and Asn1627 each carry an N-linked (GlcNAc...) asparagine glycan. The chain crosses the membrane as a helical span at residues 1746-1766; it reads VITGIILVIIALAFFGMVLST. Residues 1767 to 2703 are Cytoplasmic-facing; the sequence is QRKRAHGVTW…ANKGSEAIYI (937 aa). A disordered region spans residues 1810-1850; that stretch reads QSQGVGQPGAHWSDDESDMPLPKRQRSDPVSGVGLGNNGGY. ANK repeat units lie at residues 1901–1945, 1950–1979, 1983–2013, 2017–2046, 2050–2079, 2083–2112, and 2116–2139; these read CGLT…ELNA, TGET…DANC, TGRT…NLNA, DGTT…DINA, SGKT…NRDA, KDET…NREI, and MDRL…LDEH. The interval 2172–2257 is disordered; the sequence is TVISAGNGGN…LTGGVSGVPG (86 aa). The segment covering 2228–2238 has biased composition (low complexity); it reads KKTSAASKKAA. The interaction with Nedd4 stretch occupies residues 2325 to 2328; that stretch reads PPSY. Disordered regions lie at residues 2399-2452, 2488-2524, 2579-2620, and 2632-2703; these read SGAG…PTSP, GGGG…APPQ, LDLN…PSSQ, and PSSQ…AIYI. The span at 2414–2429 shows a compositional bias: polar residues; it reads PYSNQSPPHSVQSSLA. Phosphoserine is present on Ser2447. Gly residues predominate over residues 2488–2497; it reads GGGGGGGVGQ. Over residues 2598 to 2619 the composition is skewed to low complexity; the sequence is PPSIQSSMSGSSPSTNMLSPSS. Residues 2632 to 2653 are compositionally biased toward polar residues; sequence PSSQHSGGHTPQHLVQTLDSYP. Low complexity predominate over residues 2659–2675; it reads SPGHWSSSSPRSNSDWS. The segment covering 2677–2687 has biased composition (polar residues); it reads GVQSPAANNLY.

Belongs to the NOTCH family. Homomer. Interacts with Su(H) when activated. Interacts with Dx via its ANK repeats. Interacts with Delta via the EGF repeats and the Delta EGF repeats. Interacts with Nedd4 and Su(dx). Interacts with O-fut1; the interaction glycosylates N and transports N to early endosomes. Interacts with Akap200; the interaction stabilizes N/Notch protein levels by preventing Cbl-mediated ubiquitination and subsequent lysosomal degradation of N/Notch. Upon binding its ligands such as Delta or Serrate, it is cleaved (S2 cleavage) in its extracellular domain, close to the transmembrane domain. S2 cleavage is probably mediated by Kuz. It is then cleaved (S3 cleavage) downstream of its transmembrane domain, releasing it from the cell membrane. S3 cleavage requires Psn. In terms of processing, O-glycosylated. Three forms of O-glycosylation (O-fucosylation, O-glucosylation and O-GlcNAcylation) are detected. O-fucosylated by O-fut1 and fng in the EGF repeat domain inhibits both Serrate/Ser- and Delta/Dl-binding. O-glucosylation by rumi in the endoplasmic reticulum is necessary for correct folding and signaling. Post-translationally, ubiquitinated by various ubiquitin ligases; which promotes ligand-independent endocytosis and proteasomal degradation. Ubiquitinated by Nedd4. May also be ubiquitinated by Su(dx) and Cbl. Mono-ubiquitinated, possibly by dx/deltex; this may be involved in the ESCRT-III mediated targeting to multivesicular bodies.

The protein resides in the cell membrane. It is found in the endosome. Its subcellular location is the multivesicular body. The protein localises to the nucleus. Essential signaling protein which has a major role in many developmental processes. Functions as a receptor for membrane-bound ligands Delta and Serrate to regulate cell-fate determination. Upon ligand activation, and releasing from the cell membrane, the Notch intracellular domain (NICD) forms a transcriptional activator complex with Su(H) (Suppressor of hairless) and activates genes of the E(spl) complex. Regulates oogenesis, the differentiation of the ectoderm and the development of the central and peripheral nervous system, eye, wing disk, muscles and segmental appendages such as antennae and legs, through lateral inhibition or induction. Regulates neuroblast self-renewal, identity and proliferation through the regulation of bHLH-O proteins; in larval brains, involved in the maintenance of type II neuroblast self-renewal and identity by suppressing erm expression together with pnt; might also regulate dpn expression through the activation of the transcriptional regulator Su(H). Targeted for ESCRT-mediated endosomal sequestration and lysosomal degradation by various E3 ubiquitin ligases to regulate the Notch signaling pathway. Can undergo ligand-dependent and non-canonical ligand-independent activation. Ligand-independent activation is dependent on endosome acidification and probably occurs in late endosomes or lysosome. Ectopic ligand-independent activation occurs when disruption of the endolysosomal pathway, particularly of the ESCRT-III complex, prevents sequestration of the receptor in intraluminal vesicles of multivesicular bodies. In Drosophila melanogaster (Fruit fly), this protein is Neurogenic locus Notch protein.